A 395-amino-acid chain; its full sequence is MTRKLFTSESVTEGHPDKIADRIADAVLDAIYAKDNQARVACECLVSTGLILVAGQITTDCYVDIPRVARETVREIGYTRAKFGFDCDTCAVITSIDEQSPDIAMGVNEAWEKKQGEARDEVETLGAGDQGMMFGYATSETPEFMPMPIALAHALTRRLAAVRKERILPYLRPDGKSQVTVEYEDGRPVRVDTVVISTQHRPDIDMATLRDEVLETVIKPVIPAEMLDNRTRYFINPTGRFVIGGPQGDTGLTGRKLIVDTYGGMARHGGGALSGKDPTKVDRSAAYAARYVAKNVVAAGLADRCEVQVAYAIGVARPVSISVETFGTGKVSDDRLVELIRAHFDLRPGAIIRDLDLRRPIYKAVSVYGHFGRPDLDLPWERLDKVEALRADAGL.

Residue His-15 coordinates ATP. Asp-17 is a Mg(2+) binding site. A K(+)-binding site is contributed by Glu-43. Residue Gln-99 participates in L-methionine binding. Residues 99–109 (QSPDIAMGVNE) are flexible loop. ATP contacts are provided by residues 174–176 (DGK), 240–241 (RF), Asp-249, 255–256 (RK), Ala-272, and Lys-276. Residue Asp-249 participates in L-methionine binding. Lys-280 contributes to the L-methionine binding site.

This sequence belongs to the AdoMet synthase family. In terms of assembly, homotetramer; dimer of dimers. The cofactor is Mg(2+). It depends on K(+) as a cofactor.

Its subcellular location is the cytoplasm. The catalysed reaction is L-methionine + ATP + H2O = S-adenosyl-L-methionine + phosphate + diphosphate. The protein operates within amino-acid biosynthesis; S-adenosyl-L-methionine biosynthesis; S-adenosyl-L-methionine from L-methionine: step 1/1. In terms of biological role, catalyzes the formation of S-adenosylmethionine (AdoMet) from methionine and ATP. The overall synthetic reaction is composed of two sequential steps, AdoMet formation and the subsequent tripolyphosphate hydrolysis which occurs prior to release of AdoMet from the enzyme. The chain is S-adenosylmethionine synthase from Moorella thermoacetica (strain ATCC 39073 / JCM 9320).